An 84-amino-acid chain; its full sequence is Delta-conotoxin-like Bt6.4 (84 aa).

The first 22 residues, methionine 1–alanine 22, serve as a signal peptide directing secretion. The propeptide occupies aspartate 23–arginine 57. 3 disulfides stabilise this stretch: cysteine 58/cysteine 74, cysteine 65/cysteine 78, and cysteine 73/cysteine 82.

Belongs to the conotoxin O1 superfamily. In terms of tissue distribution, expressed by the venom duct.

The protein localises to the secreted. Its function is as follows. This toxin activates voltage-gated sodium channels. It shifts the voltage-dependence of activation to more hyperpolarized potentials but has only little effect on channel inactivation. It is active on Nav1.3/SCN3A (EC(50)=3.98 nM), Nav1.4/SCN4A (EC(50)=4.99 nM), Nav1.6/SCN8A (EC(50)=1.27 nM) and Nav1.7/SCN9A (EC(50)=2.42 nM) voltage-gated sodium channels. In vivo, it induces nocifensive or pain-like behaviors in mice when injected intraplantarly. This chain is Delta-conotoxin-like Bt6.4, found in Conus betulinus (Beech cone).